The following is a 607-amino-acid chain: Homologous recombination OB-fold protein (607 aa).

Disordered regions lie at residues 25-49, 84-108, 196-308, and 531-581; these read LRPN…SYPA, ISSS…SGRQ, PWPS…TTVT, and LKPP…DDLD. Composition is skewed to polar residues over residues 27–49 and 92–108; these read PNSS…SYPA and QQRM…SGRQ. Residue Ser30 is modified to Phosphoserine. At Arg281 the chain carries Asymmetric dimethylarginine. The segment covering 295-308 has biased composition (low complexity); the sequence is SPFSTPRSTSTTVT. A compositionally biased stretch (acidic residues) spans 570–581; it reads PEEELPEADDLD.

In terms of assembly, interacts with MCM8; this interaction is necessary for MCM8-MCM9 helicase complex recruitment to DNA damage sites. Interacts with RPA1; this interaction associates HROB with the RPA complex.

It is found in the nucleus. The protein resides in the chromosome. DNA-binding protein involved in homologous recombination that acts by recruiting the MCM8-MCM9 helicase complex to sites of DNA damage to promote DNA repair synthesis. The protein is Homologous recombination OB-fold protein of Rattus norvegicus (Rat).